The sequence spans 200 residues: Probable molybdenum cofactor guanylyltransferase (200 aa).

GTP is bound by residues 9–11, Lys-21, Asp-69, and Asp-100; that span reads LAG. A Mg(2+)-binding site is contributed by Asp-100.

This sequence belongs to the MobA family. Requires Mg(2+) as cofactor.

The protein resides in the cytoplasm. It carries out the reaction Mo-molybdopterin + GTP + H(+) = Mo-molybdopterin guanine dinucleotide + diphosphate. Transfers a GMP moiety from GTP to Mo-molybdopterin (Mo-MPT) cofactor (Moco or molybdenum cofactor) to form Mo-molybdopterin guanine dinucleotide (Mo-MGD) cofactor. This Bacillus cereus (strain AH820) protein is Probable molybdenum cofactor guanylyltransferase.